The sequence spans 806 residues: Phenylalanine--tRNA ligase beta subunit (806 aa).

In terms of domain architecture, tRNA-binding spans 40–155; that stretch reads NKGVKGVVVG…SDAEVGADAL (116 aa). Positions 409–484 constitute a B5 domain; the sequence is VQERTVSVTA…RLYGYDHIPV (76 aa). Mg(2+) contacts are provided by Asp462, Asp468, Glu471, and Glu472. Residues 712 to 805 form the FDX-ACB domain; sequence PRFPSMTRDM…VEEKFGAELR (94 aa).

Belongs to the phenylalanyl-tRNA synthetase beta subunit family. Type 1 subfamily. In terms of assembly, tetramer of two alpha and two beta subunits. The cofactor is Mg(2+).

The protein resides in the cytoplasm. It catalyses the reaction tRNA(Phe) + L-phenylalanine + ATP = L-phenylalanyl-tRNA(Phe) + AMP + diphosphate + H(+). The polypeptide is Phenylalanine--tRNA ligase beta subunit (Bacillus cereus (strain ATCC 14579 / DSM 31 / CCUG 7414 / JCM 2152 / NBRC 15305 / NCIMB 9373 / NCTC 2599 / NRRL B-3711)).